The following is a 169-amino-acid chain: NADH-quinone oxidoreductase subunit I (169 aa).

4Fe-4S ferredoxin-type domains are found at residues Arg61–Gln90 and Val100–Asn129. The [4Fe-4S] cluster site is built by Cys70, Cys73, Cys76, Cys80, Cys109, Cys112, Cys115, and Cys119.

Belongs to the complex I 23 kDa subunit family. In terms of assembly, NDH-1 is composed of 14 different subunits. Subunits NuoA, H, J, K, L, M, N constitute the membrane sector of the complex. [4Fe-4S] cluster is required as a cofactor.

The protein localises to the cell inner membrane. The enzyme catalyses a quinone + NADH + 5 H(+)(in) = a quinol + NAD(+) + 4 H(+)(out). Functionally, NDH-1 shuttles electrons from NADH, via FMN and iron-sulfur (Fe-S) centers, to quinones in the respiratory chain. The immediate electron acceptor for the enzyme in this species is believed to be ubiquinone. Couples the redox reaction to proton translocation (for every two electrons transferred, four hydrogen ions are translocated across the cytoplasmic membrane), and thus conserves the redox energy in a proton gradient. In Ehrlichia chaffeensis (strain ATCC CRL-10679 / Arkansas), this protein is NADH-quinone oxidoreductase subunit I.